The following is a 106-amino-acid chain: UPF0145 protein CLH_2273 (106 aa).

Belongs to the UPF0145 family.

In Clostridium botulinum (strain Alaska E43 / Type E3), this protein is UPF0145 protein CLH_2273.